We begin with the raw amino-acid sequence, 196 residues long: Imidazoleglycerol-phosphate dehydratase (196 aa).

This sequence belongs to the imidazoleglycerol-phosphate dehydratase family.

The protein resides in the cytoplasm. The catalysed reaction is D-erythro-1-(imidazol-4-yl)glycerol 3-phosphate = 3-(imidazol-4-yl)-2-oxopropyl phosphate + H2O. It participates in amino-acid biosynthesis; L-histidine biosynthesis; L-histidine from 5-phospho-alpha-D-ribose 1-diphosphate: step 6/9. This chain is Imidazoleglycerol-phosphate dehydratase, found in Phenylobacterium zucineum (strain HLK1).